The chain runs to 429 residues: Adenylosuccinate synthetase (429 aa).

Residues 12 to 18 (GDEGKGK) and 40 to 42 (GHT) contribute to the GTP site. Asp-13 (proton acceptor) is an active-site residue. Residues Asp-13 and Gly-40 each contribute to the Mg(2+) site. IMP is bound by residues 13 to 16 (DEGK), 38 to 41 (NAGH), Thr-129, Arg-143, Gln-223, Thr-238, and Arg-302. His-41 acts as the Proton donor in catalysis. Residue 298 to 304 (VVTGRKR) coordinates substrate. Residues Arg-304, 330–332 (KLD), and 412–414 (STS) contribute to the GTP site.

The protein belongs to the adenylosuccinate synthetase family. Homodimer. Mg(2+) is required as a cofactor.

It is found in the cytoplasm. The catalysed reaction is IMP + L-aspartate + GTP = N(6)-(1,2-dicarboxyethyl)-AMP + GDP + phosphate + 2 H(+). It participates in purine metabolism; AMP biosynthesis via de novo pathway; AMP from IMP: step 1/2. Its function is as follows. Plays an important role in the de novo pathway of purine nucleotide biosynthesis. Catalyzes the first committed step in the biosynthesis of AMP from IMP. The sequence is that of Adenylosuccinate synthetase from Brucella anthropi (strain ATCC 49188 / DSM 6882 / CCUG 24695 / JCM 21032 / LMG 3331 / NBRC 15819 / NCTC 12168 / Alc 37) (Ochrobactrum anthropi).